Here is a 323-residue protein sequence, read N- to C-terminus: tRNA U34 carboxymethyltransferase (323 aa).

Carboxy-S-adenosyl-L-methionine contacts are provided by residues K91, W105, K110, G130, D152–T154, I181–E182, M196, Y200, and R315.

This sequence belongs to the class I-like SAM-binding methyltransferase superfamily. CmoB family. In terms of assembly, homotetramer.

The enzyme catalyses carboxy-S-adenosyl-L-methionine + 5-hydroxyuridine(34) in tRNA = 5-carboxymethoxyuridine(34) in tRNA + S-adenosyl-L-homocysteine + H(+). In terms of biological role, catalyzes carboxymethyl transfer from carboxy-S-adenosyl-L-methionine (Cx-SAM) to 5-hydroxyuridine (ho5U) to form 5-carboxymethoxyuridine (cmo5U) at position 34 in tRNAs. In Escherichia coli O157:H7, this protein is tRNA U34 carboxymethyltransferase.